The following is a 664-amino-acid chain: Fructose-1,6-bisphosphatase class 3 (664 aa).

This sequence belongs to the FBPase class 3 family. Mn(2+) is required as a cofactor.

It carries out the reaction beta-D-fructose 1,6-bisphosphate + H2O = beta-D-fructose 6-phosphate + phosphate. It participates in carbohydrate biosynthesis; gluconeogenesis. The polypeptide is Fructose-1,6-bisphosphatase class 3 (Bacteroides thetaiotaomicron (strain ATCC 29148 / DSM 2079 / JCM 5827 / CCUG 10774 / NCTC 10582 / VPI-5482 / E50)).